Reading from the N-terminus, the 220-residue chain is MKTGIVTTLIALCLPVSVFATTLRLSTDVDLLVLDGKKVSSSLLRGADSIELDNGPHQLVFRVEKTIHLSNSEERLYISPPLVVSFNTQLINQVNFRLPRLENEREANHFDAAPRLELLDGDATPIPVKLDILAITSTAKAIDYEVEVERYNKSAKRASLPQFATMMADDSTLLSGVSELDAIPPQSQVLTEQRLKYWFKLADPQTRNTFLQWAEKQPSS.

A signal peptide spans 1–20 (MKTGIVTTLIALCLPVSVFA).

This sequence belongs to the UPF0319 family.

In Shigella flexneri serotype 5b (strain 8401), this protein is UPF0319 protein YccT.